The following is a 295-amino-acid chain: Ribosomal RNA small subunit methyltransferase A (295 aa).

Positions 29, 31, 56, 77, 102, and 128 each coordinate S-adenosyl-L-methionine.

It belongs to the class I-like SAM-binding methyltransferase superfamily. rRNA adenine N(6)-methyltransferase family. RsmA subfamily.

Its subcellular location is the cytoplasm. It carries out the reaction adenosine(1518)/adenosine(1519) in 16S rRNA + 4 S-adenosyl-L-methionine = N(6)-dimethyladenosine(1518)/N(6)-dimethyladenosine(1519) in 16S rRNA + 4 S-adenosyl-L-homocysteine + 4 H(+). In terms of biological role, specifically dimethylates two adjacent adenosines (A1518 and A1519) in the loop of a conserved hairpin near the 3'-end of 16S rRNA in the 30S particle. May play a critical role in biogenesis of 30S subunits. This chain is Ribosomal RNA small subunit methyltransferase A, found in Listeria monocytogenes serovar 1/2a (strain ATCC BAA-679 / EGD-e).